Here is a 382-residue protein sequence, read N- to C-terminus: Anhydro-N-acetylmuramic acid kinase (382 aa).

ATP is bound at residue 9–16; it reads GTSLDGID.

This sequence belongs to the anhydro-N-acetylmuramic acid kinase family.

It catalyses the reaction 1,6-anhydro-N-acetyl-beta-muramate + ATP + H2O = N-acetyl-D-muramate 6-phosphate + ADP + H(+). It participates in amino-sugar metabolism; 1,6-anhydro-N-acetylmuramate degradation. The protein operates within cell wall biogenesis; peptidoglycan recycling. Catalyzes the specific phosphorylation of 1,6-anhydro-N-acetylmuramic acid (anhMurNAc) with the simultaneous cleavage of the 1,6-anhydro ring, generating MurNAc-6-P. Is required for the utilization of anhMurNAc either imported from the medium or derived from its own cell wall murein, and thus plays a role in cell wall recycling. The polypeptide is Anhydro-N-acetylmuramic acid kinase (Bacillus cereus (strain AH187)).